The sequence spans 494 residues: Probable cytosol aminopeptidase (494 aa).

Positions 260 and 265 each coordinate Mn(2+). Lysine 272 is a catalytic residue. Mn(2+) contacts are provided by aspartate 283, aspartate 342, and glutamate 344. Arginine 346 is a catalytic residue.

It belongs to the peptidase M17 family. It depends on Mn(2+) as a cofactor.

The protein resides in the cytoplasm. The catalysed reaction is Release of an N-terminal amino acid, Xaa-|-Yaa-, in which Xaa is preferably Leu, but may be other amino acids including Pro although not Arg or Lys, and Yaa may be Pro. Amino acid amides and methyl esters are also readily hydrolyzed, but rates on arylamides are exceedingly low.. The enzyme catalyses Release of an N-terminal amino acid, preferentially leucine, but not glutamic or aspartic acids.. In terms of biological role, presumably involved in the processing and regular turnover of intracellular proteins. Catalyzes the removal of unsubstituted N-terminal amino acids from various peptides. The polypeptide is Probable cytosol aminopeptidase (Bacillus cereus (strain ATCC 10987 / NRS 248)).